We begin with the raw amino-acid sequence, 257 residues long: NAD-capped RNA hydrolase NudC (257 aa).

Lys27 and Arg71 together coordinate substrate. Residues Cys100 and Cys103 each contribute to the Zn(2+) site. Glu113 provides a ligand contact to substrate. 2 residues coordinate Zn(2+): Cys118 and Cys121. Position 126 (Tyr126) interacts with substrate. Residues 127 to 251 (PQIAPCIIVG…IARRLIEDTI (125 aa)) form the Nudix hydrolase domain. Ala160, Glu176, and Glu180 together coordinate a divalent metal cation. A Nudix box motif is present at residues 161–182 (GFVEVGETLEEAVVREVMEESN). 194 to 201 (QPWPFPHS) contacts substrate. Glu221 is an a divalent metal cation binding site. Ala243 is a binding site for substrate.

It belongs to the Nudix hydrolase family. NudC subfamily. In terms of assembly, homodimer. The cofactor is Mg(2+). Mn(2+) is required as a cofactor. Zn(2+) serves as cofactor.

The catalysed reaction is a 5'-end NAD(+)-phospho-ribonucleoside in mRNA + H2O = a 5'-end phospho-adenosine-phospho-ribonucleoside in mRNA + beta-nicotinamide D-ribonucleotide + 2 H(+). It carries out the reaction NAD(+) + H2O = beta-nicotinamide D-ribonucleotide + AMP + 2 H(+). The enzyme catalyses NADH + H2O = reduced beta-nicotinamide D-ribonucleotide + AMP + 2 H(+). Its function is as follows. mRNA decapping enzyme that specifically removes the nicotinamide adenine dinucleotide (NAD) cap from a subset of mRNAs by hydrolyzing the diphosphate linkage to produce nicotinamide mononucleotide (NMN) and 5' monophosphate mRNA. The NAD-cap is present at the 5'-end of some mRNAs and stabilizes RNA against 5'-processing. Has preference for mRNAs with a 5'-end purine. Catalyzes the hydrolysis of a broad range of dinucleotide pyrophosphates. The chain is NAD-capped RNA hydrolase NudC from Photorhabdus laumondii subsp. laumondii (strain DSM 15139 / CIP 105565 / TT01) (Photorhabdus luminescens subsp. laumondii).